A 559-amino-acid chain; its full sequence is Laccase-7 (559 aa).

Residues 1-28 (MVIPWCSSMMRLLWFLFALLLARSVADA) form the signal peptide. 3 N-linked (GlcNAc...) asparagine glycosylation sites follow: Asn-32, Asn-47, and Asn-82. Plastocyanin-like domains follow at residues 36–152 (TVES…PRNG) and 163–316 (EVPI…YNTT). Residues His-86 and His-88 each contribute to the Cu cation site. N-linked (GlcNAc...) asparagine glycans are attached at residues Asn-112 and Asn-120. Cu cation is bound by residues His-131 and His-133. Residues Asn-151, Asn-210, Asn-220, Asn-257, Asn-278, Asn-314, Asn-363, and Asn-443 are each glycosylated (N-linked (GlcNAc...) asparagine). The region spanning 396–543 (FRLPSQMSLL…GMVFAVDNGT (148 aa)) is the Plastocyanin-like 3 domain. Residues His-461, His-464, and His-466 each coordinate Cu cation. Asn-484 carries an N-linked (GlcNAc...) asparagine glycan. Cu cation contacts are provided by His-522, Cys-523, His-524, and His-528. An N-linked (GlcNAc...) asparagine glycan is attached at Asn-541.

Belongs to the multicopper oxidase family. Requires Cu cation as cofactor.

Its subcellular location is the secreted. The protein resides in the extracellular space. It localises to the apoplast. The catalysed reaction is 4 hydroquinone + O2 = 4 benzosemiquinone + 2 H2O. Lignin degradation and detoxification of lignin-derived products. In Oryza sativa subsp. japonica (Rice), this protein is Laccase-7 (LAC7).